A 259-amino-acid chain; its full sequence is (3R)-3-hydroxyacyl-CoA dehydrogenase (259 aa).

Residues 13-21 (LVTGAGSGI) and 40-41 (DL) each bind NAD(+). S58 is modified (phosphoserine). 72-74 (ADV) is a binding site for NAD(+). S154 is a binding site for substrate. N6-succinyllysine is present on K158. Y167 functions as the Proton acceptor in the catalytic mechanism. Residues 167–171 (YAASK) and 200–202 (ITT) contribute to the NAD(+) site. Position 171 is an N6-succinyllysine (K171).

This sequence belongs to the short-chain dehydrogenases/reductases (SDR) family. Heterotetramer with CBR4; contains two molecules of HSD17B8 and CBR4.

Its subcellular location is the mitochondrion matrix. It carries out the reaction a (3R)-3-hydroxyacyl-CoA + NAD(+) = a 3-oxoacyl-CoA + NADH + H(+). The enzyme catalyses 17beta-estradiol + NAD(+) = estrone + NADH + H(+). The catalysed reaction is testosterone + NAD(+) = androst-4-ene-3,17-dione + NADH + H(+). It catalyses the reaction 17beta-hydroxy-5alpha-androstan-3-one + NAD(+) = 5alpha-androstan-3,17-dione + NADH + H(+). It functions in the pathway steroid biosynthesis; estrogen biosynthesis. The protein operates within lipid metabolism; fatty acid biosynthesis. Its pathway is lipid metabolism; mitochondrial fatty acid beta-oxidation. In terms of biological role, required for the solubility and assembly of the heterotetramer 3-ketoacyl-[acyl carrier protein] (ACP) reductase functional complex (KAR or KAR1) that forms part of the mitochondrial fatty acid synthase (mtFAS). Alpha-subunit of the KAR complex that acts as scaffold protein required for the stability of carbonyl reductase type-4 (CBR4, beta-subunit of the KAR complex) and for its 3-ketoacyl-ACP reductase activity, thereby participating in mitochondrial fatty acid biosynthesis. Catalyzes the NAD-dependent conversion of (3R)-3-hydroxyacyl-CoA into 3-ketoacyl-CoA (3-oxoacyl-CoA) with no chain length preference; this enzymatic activity is not needed for the KAR function. Prefers (3R)-3-hydroxyacyl-CoA over (3S)-3-hydroxyacyl-CoA and displays enzymatic activity only in the presence of NAD(+). Cooperates with enoyl-CoA hydratase 1 in mitochondria, together they constitute an alternative route to the auxiliary enzyme pathways for the breakdown of Z-PUFA (cis polyunsaturated fatty acid) enoyl-esters. NAD-dependent 17-beta-hydroxysteroid dehydrogenase with highest activity towards estradiol (17beta-estradiol or E2). Has very low activity towards testosterone and dihydrotestosterone (17beta-hydroxy-5alpha-androstan-3-one). Primarily an oxidative enzyme, it can switch to a reductive mode determined in the appropriate physiologic milieu and catalyze the reduction of estrone (E1) to form biologically active 17beta-estradiol. The polypeptide is (3R)-3-hydroxyacyl-CoA dehydrogenase (HSD17B8) (Canis lupus familiaris (Dog)).